Consider the following 288-residue polypeptide: Phytanoyl-CoA dioxygenase domain-containing protein 1 homolog (288 aa).

2-oxoglutarate contacts are provided by residues K95, M134, H149–D151, and W167. H149 and D151 together coordinate Fe cation. A Fe cation-binding site is contributed by H242. The 2-oxoglutarate site is built by S244 and R253.

The protein belongs to the PhyH family. PHYHD1 subfamily. Fe cation is required as a cofactor.

In terms of biological role, has alpha-ketoglutarate-dependent dioxygenase activity. Does not show detectable activity towards fatty acid CoA thioesters. Is not expected to be active with phytanoyl CoA. In Caenorhabditis briggsae, this protein is Phytanoyl-CoA dioxygenase domain-containing protein 1 homolog.